A 38-amino-acid polypeptide reads, in one-letter code: Photosystem II reaction center protein L (38 aa).

The helical transmembrane segment at 17 to 37 (SLFWGLLLIFVLAVLFSNYFF) threads the bilayer.

Belongs to the PsbL family. In terms of assembly, PSII is composed of 1 copy each of membrane proteins PsbA, PsbB, PsbC, PsbD, PsbE, PsbF, PsbH, PsbI, PsbJ, PsbK, PsbL, PsbM, PsbT, PsbX, PsbY, PsbZ, Psb30/Ycf12, at least 3 peripheral proteins of the oxygen-evolving complex and a large number of cofactors. It forms dimeric complexes.

It localises to the plastid. Its subcellular location is the chloroplast thylakoid membrane. In terms of biological role, one of the components of the core complex of photosystem II (PSII). PSII is a light-driven water:plastoquinone oxidoreductase that uses light energy to abstract electrons from H(2)O, generating O(2) and a proton gradient subsequently used for ATP formation. It consists of a core antenna complex that captures photons, and an electron transfer chain that converts photonic excitation into a charge separation. This subunit is found at the monomer-monomer interface and is required for correct PSII assembly and/or dimerization. In Chaetosphaeridium globosum (Charophycean green alga), this protein is Photosystem II reaction center protein L.